A 175-amino-acid polypeptide reads, in one-letter code: Large ribosomal subunit protein uL10 (175 aa).

The protein belongs to the universal ribosomal protein uL10 family. As to quaternary structure, part of the ribosomal stalk of the 50S ribosomal subunit. The N-terminus interacts with L11 and the large rRNA to form the base of the stalk. The C-terminus forms an elongated spine to which L12 dimers bind in a sequential fashion forming a multimeric L10(L12)X complex.

Forms part of the ribosomal stalk, playing a central role in the interaction of the ribosome with GTP-bound translation factors. The chain is Large ribosomal subunit protein uL10 from Xylella fastidiosa (strain M23).